Reading from the N-terminus, the 957-residue chain is Nitrite reductase [NAD(P)H] large subunit (957 aa).

Residue tyrosine 44–serine 79 participates in FAD binding. Leucine 193 to arginine 225 is an NAD(+) binding site. Cysteine 423, cysteine 425, cysteine 457, and cysteine 460 together coordinate [2Fe-2S] cluster. Residues cysteine 639, cysteine 645, cysteine 679, and cysteine 683 each contribute to the [4Fe-4S] cluster site. Cysteine 683 is a binding site for siroheme.

This sequence belongs to the nitrite and sulfite reductase 4Fe-4S domain family. In terms of assembly, homodimer which associates with NirD. Siroheme serves as cofactor. The cofactor is [2Fe-2S] cluster. It depends on [4Fe-4S] cluster as a cofactor. FAD is required as a cofactor.

The catalysed reaction is NH4(+) + 3 NADP(+) + 2 H2O = nitrite + 3 NADPH + 5 H(+). The enzyme catalyses NH4(+) + 3 NAD(+) + 2 H2O = nitrite + 3 NADH + 5 H(+). Its pathway is nitrogen metabolism; nitrate reduction (assimilation). The sequence is that of Nitrite reductase [NAD(P)H] large subunit (nasB) from Klebsiella oxytoca.